The sequence spans 688 residues: ATP-dependent RNA helicase ded1 (688 aa).

2 stretches are compositionally biased toward polar residues: residues 1–15 and 55–67; these read MADQ…LSID and GLNN…NNNY. The tract at residues 1–170 is disordered; it reads MADQLSSGMG…TPDDPSKQHT (170 aa). Positions 88–102 are enriched in gly residues; that stretch reads GFEGQQGAGWGGPRP. Low complexity predominate over residues 103–114; that stretch reads QGGFNPNAYRGN. Residues 115–129 show a composition bias toward gly residues; it reads AGAGAGAGAGGGGGS. Positions 194-222 match the Q motif motif; that stretch reads LTFSNPPLDNHLISNIQLARYNVPTPVQK. The region spanning 225-416 is the Helicase ATP-binding domain; sequence IPIVMGGRDL…RDFLKDYIFL (192 aa). ATP is bound at residue 238 to 245; the sequence is AQTGSGKT. Positions 360–363 match the DEAD box motif; it reads DEAD. The Helicase C-terminal domain maps to 427-587; that stretch reads NITQKVEYVE…EVPAFLETIA (161 aa). The tract at residues 590–615 is disordered; sequence SSFGGGRGGRGGGRGGGRGRTQTADY. The segment covering 592-608 has biased composition (gly residues); the sequence is FGGGRGGRGGGRGGGRG.

Belongs to the DEAD box helicase family. DDX3/DED1 subfamily.

The protein localises to the cytoplasm. It carries out the reaction ATP + H2O = ADP + phosphate + H(+). ATP-binding RNA helicase involved in translation initiation. Remodels RNA in response to ADP and ATP concentrations by facilitating disruption, but also formation of RNA duplexes. The protein is ATP-dependent RNA helicase ded1 (drh-9) of Neurospora crassa (strain ATCC 24698 / 74-OR23-1A / CBS 708.71 / DSM 1257 / FGSC 987).